A 972-amino-acid polypeptide reads, in one-letter code: MSTSKATATYLRSIMLPENGPASIPDDITERHILKQETSSYNLEVSESGSGLLVCFPGAPGSRVGAHYRWNLNQTALEFDQWLETSQDLKKAFNYGRLISRKYDIQSSTLPAGLYALNGTLNAATFEGSLSEVESLTYNSLMSLTTNPQDKVNNQLVTKGITVLNLPTGFDKPYVRLEDETPQGPQSMNGARMRCTAAIAPRRYEIDLPSERLPTVAATGTPTTIYEGNADIVNSTAVTGDITFQLEAEPVNETRFDFILQFLGLDNDVPVVTVTSSTLVTADNYRGASAKFTQSIPTEMITKPITRVKLAYQLNQQTAIANAATLGAKGPASVSFSSGNGNVPGVLRPITLVAYEKMTPQSILTVAGVSNYELIPNPDLLKNMVTKYGKYDPEGLNYAKMILSHREELDIRTVWRTEEYKERTRAFKEITDFTSDLPTSKAWGWRDLVRGIRKVAAPVLSTLFPMAAPLIGAADQFIGDLTKTNSAGGRYLSHAAGGRYHDVMDSWASGSEAGSYSKHLKTRLESNNYEEVELPKPTKGVIFPVVHTVESAPGEAFGSLVVVIPEAYPELLDPNQQVLSYFKNDTGCVWGIGEDIPFEGDDMCYTALPLKEIKRNGNIVVEKIFAGPAMGPSSQLALSLLVNDIDEGIPRMVFTGEIADDEETVIPICGVDIKAIAAHEHGLPLIGCQPGVDEMVANTSLASHLIQGGALPVQKAQGACRRIKYLGQLMRTTASGMDAELQGLLQATMARAKEVKDAEVFKLLKLMSWTRKNDLTDHMYEWSKEDPDAIKFGRLVSTPPKHQEKPKGPDQHTAQEAKATRISLDAVKAGADFASPEWIAENNYRGPSPGQFKYYMITGRVPNPGEEYEDYVRKPITRPTDMDKIRRLANSVYGLPHQEPAPDDFYQAVVEVFAENGGRGPDQDQMQDLRDLARQMKRRPRPAETRRQTKTPPRAATSSGSRFTPSGDDGEV.

An a divalent metal cation-binding site is contributed by D26. The Peptidase S50 domain maps to 509-734; the sequence is SGSEAGSYSK…YLGQLMRTTA (226 aa). The active-site Nucleophile is the S633. Residue K674 is part of the active site. 2 disordered regions span residues 797–817 and 917–972; these read STPP…AQEA and GGRG…DGEV. The segment covering 801 to 817 has biased composition (basic and acidic residues); sequence KHQEKPKGPDQHTAQEA.

Homotrimer. A central divalent metal (possibly cobalt) stabilizes the VP2 trimer. As to quaternary structure, homodimer. interacts (via C-terminus) with VP1 in the cytoplasm. Interacts with VP2. Specific enzymatic cleavages yield mature proteins. Capsid assembly seems to be regulated by polyprotein processing. The protease VP4 cleaves itself off the polyprotein, thus releasing pre-VP2 and VP3 within the infected cell. During capsid assembly, the C-terminus of pre-VP2 is further processed by VP4, giving rise to VP2, the external capsid protein and three small peptides that all stay closely associated with the capsid.

Its subcellular location is the virion. It localises to the host cytoplasm. Functionally, capsid protein VP2 self assembles to form an icosahedral capsid with a T=13 symmetry, about 70 nm in diameter, and consisting of 260 VP2 trimers. The capsid encapsulates the genomic dsRNA. VP2 is also involved in attachment and entry into the host cell. In terms of biological role, the precursor of VP2 plays an important role in capsid assembly. First, pre-VP2 and VP2 oligomers assemble to form a procapsid. Then, the pre-VP2 intermediates may be processed into VP2 proteins by proteolytic cleavage mediated by VP4 to obtain the mature virion. The final capsid is composed of pentamers and hexamers but VP2 has a natural tendency to assemble into all-pentameric structures. Therefore pre-VP2 may be required to allow formation of the hexameric structures. Protease VP4 is a serine protease that cleaves the polyprotein into its final products. Pre-VP2 is first partially cleaved, and may be completely processed by VP4 upon capsid maturation. Its function is as follows. Capsid protein VP3 plays a key role in virion assembly by providing a scaffold for the capsid composed of VP2. May self-assemble to form a T=4-like icosahedral inner-capsid composed of at least 180 trimers. Plays a role in genomic RNA packaging by recruiting VP1 into the capsid and interacting with the dsRNA genome segments to form a ribonucleoprotein complex. Additionally, the interaction of the VP3 C-terminal tail with VP1 removes the inherent structural blockade of the polymerase active site. Thus, VP3 can also function as a transcriptional activator. Functionally, structural peptide 1 is a small peptide derived from the C-terminus of pre-VP2. It destabilizes and perforates cell membranes, suggesting a role during viral entry. In terms of biological role, structural peptide 2 is a small peptide derived from the C-terminus of pre-VP2. It is not essential for virus viability, but viral growth is affected when this protein is absent. Structural peptide 3 is a small peptide derived from pre-VP2 C-terminus. It is not essential for virus viability, but viral growth is affected when this protein is absent. The polypeptide is Structural polyprotein (Oncorhynchus mykiss (Rainbow trout)).